Here is an 88-residue protein sequence, read N- to C-terminus: Apolipoprotein C-I (88 aa).

A signal peptide spans 1 to 26 (MRLILSLPVLVVVLSMVLEGPAPAQA).

Belongs to the apolipoprotein C1 family. As to expression, expressed in the liver.

It localises to the secreted. In terms of biological role, inhibitor of lipoprotein binding to the low density lipoprotein (LDL) receptor, LDL receptor-related protein, and very low density lipoprotein (VLDL) receptor. Associates with high density lipoproteins (HDL) and the triacylglycerol-rich lipoproteins in the plasma and makes up about 10% of the protein of the VLDL and 2% of that of HDL. Appears to interfere directly with fatty acid uptake and is also the major plasma inhibitor of cholesteryl ester transfer protein (CETP). Binds free fatty acids and reduces their intracellular esterification. Modulates the interaction of APOE with beta-migrating VLDL and inhibits binding of beta-VLDL to the LDL receptor-related protein. This chain is Apolipoprotein C-I (APOC1), found in Canis lupus familiaris (Dog).